The primary structure comprises 505 residues: ADP-ribosylarginine hydrolase CG2909 (505 aa).

ADP-D-ribose is bound by residues R198, G336, G338, G340, V341, W342, W377, D432, N439, E440, G450, and D451.

It carries out the reaction N(omega)-(ADP-D-ribosyl)-L-arginyl-[protein] + H2O = ADP-D-ribose + L-arginyl-[protein]. The catalysed reaction is N(omega)-(ADP-D-ribosyl)-L-arginine + H2O = ADP-D-ribose + L-arginine. In terms of biological role, protein ADP-ribosyl hydrolase that specifically removes mono-ADP-ribosyl modifications from protein arginine residues. The chain is ADP-ribosylarginine hydrolase CG2909 from Drosophila melanogaster (Fruit fly).